The sequence spans 605 residues: Replication protein E1 (605 aa).

Residues 76–78 (KRK) carry the Nuclear localization signal motif. Ser81 and Ser89 each carry phosphoserine; by host. Positions 88 to 97 (LSPRLESISL) match the Nuclear export signal motif. The segment at 145-308 (HLGTVDIHYT…TIVGHQSTEA (164 aa)) is DNA-binding region. Residues 407–557 (VNVIMFLAAL…FPMKPDNTPE (151 aa)) form the SF3 helicase domain. 433–440 (GPPNTGKS) contributes to the ATP binding site. Lys514 participates in a covalent cross-link: Glycyl lysine isopeptide (Lys-Gly) (interchain with G-Cter in SUMO). A disordered region spans residues 580–605 (DQEDEGENGESQQAFQCSARSANEHL). Residues 588–605 (GESQQAFQCSARSANEHL) are compositionally biased toward polar residues.

It belongs to the papillomaviridae E1 protein family. As to quaternary structure, can form hexamers. Interacts with E2 protein; this interaction increases E1 DNA binding specificity. Interacts with host DNA polymerase subunit POLA2. Interacts with host single stranded DNA-binding protein RPA1. Interacts with host TOP1; this interaction stimulates the enzymatic activity of TOP1. Phosphorylated. Post-translationally, sumoylated.

It localises to the host nucleus. It catalyses the reaction Couples ATP hydrolysis with the unwinding of duplex DNA by translocating in the 3'-5' direction.. The catalysed reaction is ATP + H2O = ADP + phosphate + H(+). In terms of biological role, ATP-dependent DNA 3'-5' helicase required for initiation of viral DNA replication. It forms a complex with the viral E2 protein. The E1-E2 complex binds to the replication origin which contains binding sites for both proteins. During the initial step, a dimer of E1 interacts with a dimer of protein E2 leading to a complex that binds the viral origin of replication with high specificity. Then, a second dimer of E1 displaces the E2 dimer in an ATP-dependent manner to form the E1 tetramer. Following this, two E1 monomers are added to each half of the site, which results in the formation of two E1 trimers on the viral ori. Subsequently, two hexamers will be created. The double hexamer acts as a bi-directional helicase machinery and unwinds the viral DNA and then recruits the host DNA polymerase to start replication. In Homo sapiens (Human), this protein is Replication protein E1.